A 163-amino-acid chain; its full sequence is tRNA-acetylating toxin 2 (163 aa).

9 residues coordinate acetyl-CoA: leucine 89, valine 91, histidine 96, glycine 97, glutamine 98, glycine 99, alanine 101, arginine 102, and glutamate 132. Residue tyrosine 137 is part of the active site. Arginine 139 lines the acetyl-CoA pocket.

It belongs to the acetyltransferase family. GNAT subfamily. In terms of assembly, homodimer (in absence of antitoxin). Forms a complex with cognate antitoxin TacA2. Forms a 4:2 antitoxin:toxin complex with cognate antitoxin TacA2.

The enzyme catalyses glycyl-tRNA(Gly) + acetyl-CoA = N-acetylglycyl-tRNA(Gly) + CoA + H(+). Toxic component of a type II toxin-antitoxin (TA) system. Acetylates tRNA and inhibits translation. Acetylates exclusively Gly in situ. Overexpression during the lag phase of a tacA2-tacT2 deletion strain leads to very small increase in persister cells in the presence of cefotaxime but no detectable growth phenotype in absence of antibiotics. Compared to a protein with a single amino acid change (TacT2 from S.enterica NCTC 13349, Glu-29 is Lys in NCTC 13349) this protein binds tRNA very poorly and acetylates tRNA very poorly. Persister cell formation is neutralized by cognate antitoxin TacA2. Neutralized only by cognate antitoxin TacA2 (A8), but not by TacA1 or TacA3. Plays a role in persister cell formation. Its function is as follows. The TacA2-TacT2 complex both represses and derepresses expression of its own operon. The polypeptide is tRNA-acetylating toxin 2 (Salmonella typhimurium (strain 14028s / SGSC 2262)).